The following is a 343-amino-acid chain: Protein RecA (343 aa).

G65–T72 serves as a coordination point for ATP.

It belongs to the RecA family.

Its subcellular location is the cytoplasm. In terms of biological role, can catalyze the hydrolysis of ATP in the presence of single-stranded DNA, the ATP-dependent uptake of single-stranded DNA by duplex DNA, and the ATP-dependent hybridization of homologous single-stranded DNAs. It interacts with LexA causing its activation and leading to its autocatalytic cleavage. The polypeptide is Protein RecA (Campylobacter jejuni subsp. jejuni serotype O:6 (strain 81116 / NCTC 11828)).